Reading from the N-terminus, the 1150-residue chain is ATP-dependent helicase/deoxyribonuclease subunit B (1150 aa).

8 to 15 is an ATP binding site; sequence GRAGSGKS. Positions 789, 1109, 1112, and 1118 each coordinate [4Fe-4S] cluster.

The protein belongs to the helicase family. AddB/RexB type 1 subfamily. In terms of assembly, heterodimer of AddA and AddB. The cofactor is Mg(2+). [4Fe-4S] cluster serves as cofactor.

The heterodimer acts as both an ATP-dependent DNA helicase and an ATP-dependent, dual-direction single-stranded exonuclease. Recognizes the chi site generating a DNA molecule suitable for the initiation of homologous recombination. The AddB subunit has 5' -&gt; 3' nuclease activity but not helicase activity. The sequence is that of ATP-dependent helicase/deoxyribonuclease subunit B from Clostridium kluyveri (strain NBRC 12016).